Consider the following 315-residue polypeptide: Protein sprouty homolog 2 (315 aa).

Residues 1–15 (MEARAQSGNGSQPLL) show a composition bias toward polar residues. A disordered region spans residues 1–140 (MEARAQSGNG…SEQRLLGSSF (140 aa)). A compositionally biased stretch (basic and acidic residues) spans 20 to 32 (DGGRPRGEPDPRD). The span at 108–140 (SRSISTVSSGSRSSTRTSTSSSSSEQRLLGSSF) shows a compositional bias: low complexity. The required for interaction with CAV1 stretch occupies residues 118–315 (SRSSTRTSTS…VPRRNFEKPT (198 aa)). Positions 177–291 (RCEDCGKCKC…CYDRVNRPGC (115 aa)) constitute an SPR domain. Residues 178-315 (CEDCGKCKCK…VPRRNFEKPT (138 aa)) are required for interaction with TESK1.

Belongs to the sprouty family. In terms of assembly, forms heterodimers with SPRY1. Forms a tripartite complex containing GAB1, METTL13 and SPRY2. Within the complex interacts with METTL13. Interacts with RAF1. Interacts (via C-terminus) with TESK1 (via C-terminus); the interaction disrupts SPRY2 interaction with GRB2, potentially via disruption of SPRY2 serine dephosphorylation. Interacts with PPP2R1A/PP2A-A and PPP2CA/PP2A-C; the interaction with PPP2CA/PP2A-C is inhibited by interaction with TESK1, possibly by vesicular sequestration of SPRY2. Inhibition of the interaction with the serine/threonine-protein phosphatase 2A (PP2A) holoenzyme results in loss of PP2A-mediated dephosphorylation, resulting in the loss of SPRY2 interaction with GRB2. Interacts with GRB2. Interacts with CBL/C-CBL; the interaction inhibits CBL-mediated ubiquitination of EGFR. Interacts (via C-terminus) with CAV1 (via C-terminus). Post-translationally, cleaved at Pro-144 by the prolyl endopeptidase FAP (seprase) activity (in vitro).

The protein resides in the cytoplasm. It is found in the cytoskeleton. It localises to the cell projection. Its subcellular location is the ruffle membrane. Functionally, antagonist of fibroblast growth factor (FGF) pathways via inhibition of FGF-mediated phosphorylation of ERK1/2. Thereby acts as an antagonist of FGF-induced retinal lens fiber differentiation, may inhibit limb bud outgrowth and may negatively modulate respiratory organogenesis. Inhibits TGFB-induced epithelial-to-mesenchymal transition in retinal lens epithelial cells. Inhibits CBL/C-CBL-mediated EGFR ubiquitination. This is Protein sprouty homolog 2 (SPRY2) from Pongo abelii (Sumatran orangutan).